We begin with the raw amino-acid sequence, 102 residues long: Protein translation factor SUI1 homolog (102 aa).

This sequence belongs to the SUI1 family.

This chain is Protein translation factor SUI1 homolog, found in Methanosarcina acetivorans (strain ATCC 35395 / DSM 2834 / JCM 12185 / C2A).